The following is a 1067-amino-acid chain: Ubiquitin conjugation factor E4 A (1067 aa).

Residues 33 to 57 form a disordered region; the sequence is KEQLKQQSDELPASPDDSDNSVSES. K386 is modified (N6-acetyllysine). In terms of domain architecture, U-box spans 987-1061; sequence DACDEFLDPI…QRWLAERKQQ (75 aa).

This sequence belongs to the ubiquitin conjugation factor E4 family.

It localises to the cytoplasm. It catalyses the reaction S-ubiquitinyl-[E2 ubiquitin-conjugating enzyme]-L-cysteine + [acceptor protein]-L-lysine = [E2 ubiquitin-conjugating enzyme]-L-cysteine + N(6)-ubiquitinyl-[acceptor protein]-L-lysine.. Its pathway is protein modification; protein ubiquitination. In terms of biological role, ubiquitin-protein ligase that probably functions as an E3 ligase in conjunction with specific E1 and E2 ligases. May also function as an E4 ligase mediating the assembly of polyubiquitin chains on substrates ubiquitinated by another E3 ubiquitin ligase. Mediates 'Lys-48'-linked polyubiquitination of substrates. The protein is Ubiquitin conjugation factor E4 A of Bos taurus (Bovine).